A 232-amino-acid chain; its full sequence is Small ribosomal subunit protein uS2 (232 aa).

The protein belongs to the universal ribosomal protein uS2 family.

This is Small ribosomal subunit protein uS2 from Alkaliphilus oremlandii (strain OhILAs) (Clostridium oremlandii (strain OhILAs)).